Consider the following 429-residue polypeptide: Hydrogenobyrinate a,c-diamide synthase (429 aa).

A GATase cobBQ-type domain is found at 240 to 429 (RTAVARDVAF…SFMHLIDFSE (190 aa)). The active-site Nucleophile is the C323.

This sequence belongs to the CobB/CbiA family. Mg(2+) serves as cofactor.

It catalyses the reaction hydrogenobyrinate + 2 L-glutamine + 2 ATP + 2 H2O = hydrogenobyrinate a,c-diamide + 2 L-glutamate + 2 ADP + 2 phosphate + 2 H(+). It functions in the pathway cofactor biosynthesis; adenosylcobalamin biosynthesis; cob(II)yrinate a,c-diamide from precorrin-2 (aerobic route): step 9/10. In terms of biological role, catalyzes the ATP-dependent amidation of the two carboxylate groups at positions a and c of hydrogenobyrinate, using either L-glutamine or ammonia as the nitrogen source. This Rhizobium meliloti (strain 1021) (Ensifer meliloti) protein is Hydrogenobyrinate a,c-diamide synthase.